The primary structure comprises 161 residues: Putative pre-16S rRNA nuclease (161 aa).

Belongs to the YqgF nuclease family.

The protein localises to the cytoplasm. In terms of biological role, could be a nuclease involved in processing of the 5'-end of pre-16S rRNA. In Bradyrhizobium sp. (strain ORS 278), this protein is Putative pre-16S rRNA nuclease.